We begin with the raw amino-acid sequence, 339 residues long: MISFNNVSKVYESGGQSVHAVEDVTLSVEKGEIFGIIGFSGAGKSTLLRLVNMLERPTAGTISIDDKDITSLSTKELRKLRQRIGMIFQSFNLFNSRTVFGNIAYPLKLAKVPKNEIKERVNELLKFVGLEDKANNYPEQLSGGQKQRVGIARALATSPDILICDEATSALDPETTTEILNLLKKVNREYNLTILLITHEMHVVKEICHRVAVMEKGKVIEEGKLFDVFTQPKTKTTQNFVRSVINDHLPESVLAKIQNGGQIYRLTFTGEETGQPVLSYIAKNYNVDVNVLYGNIIELQNVLFGNLLVELQGEQREIQKALQHLRLQVQLKEVEAHAS.

Residues 2–241 enclose the ABC transporter domain; that stretch reads ISFNNVSKVY…PKTKTTQNFV (240 aa). Position 38–45 (38–45) interacts with ATP; that stretch reads GFSGAGKS.

This sequence belongs to the ABC transporter superfamily. Methionine importer (TC 3.A.1.24) family. As to quaternary structure, the complex is composed of two ATP-binding proteins (MetN), two transmembrane proteins (MetI) and a solute-binding protein (MetQ).

The protein localises to the cell membrane. The enzyme catalyses L-methionine(out) + ATP + H2O = L-methionine(in) + ADP + phosphate + H(+). It catalyses the reaction D-methionine(out) + ATP + H2O = D-methionine(in) + ADP + phosphate + H(+). Its function is as follows. Part of the ABC transporter complex MetNIQ involved in methionine import. Responsible for energy coupling to the transport system. The protein is Methionine import ATP-binding protein MetN 1 of Bacillus thuringiensis subsp. konkukian (strain 97-27).